The primary structure comprises 448 residues: Methylenetetrahydrofolate--tRNA-(uracil-5-)-methyltransferase TrmFO (448 aa).

Position 10-15 (10-15 (GAGLAG)) interacts with FAD.

Belongs to the MnmG family. TrmFO subfamily. FAD serves as cofactor.

It localises to the cytoplasm. The catalysed reaction is uridine(54) in tRNA + (6R)-5,10-methylene-5,6,7,8-tetrahydrofolate + NADH + H(+) = 5-methyluridine(54) in tRNA + (6S)-5,6,7,8-tetrahydrofolate + NAD(+). It catalyses the reaction uridine(54) in tRNA + (6R)-5,10-methylene-5,6,7,8-tetrahydrofolate + NADPH + H(+) = 5-methyluridine(54) in tRNA + (6S)-5,6,7,8-tetrahydrofolate + NADP(+). Catalyzes the folate-dependent formation of 5-methyl-uridine at position 54 (M-5-U54) in all tRNAs. The sequence is that of Methylenetetrahydrofolate--tRNA-(uracil-5-)-methyltransferase TrmFO from Lactococcus lactis subsp. cremoris (strain MG1363).